Reading from the N-terminus, the 325-residue chain is Olfactory receptor 1S1 (325 aa).

Topologically, residues 1–38 (MKTFSSFLQIGRNMHQGNQTTITEFILLGFFKQDEHQN) are extracellular. N-linked (GlcNAc...) asparagine glycosylation is present at Asn18. Residues 39–62 (LLFVLFLGMYLVTVIGNGLIIVAI) form a helical membrane-spanning segment. Over 63–70 (SLDTYLHT) the chain is Cytoplasmic. Residues 71–92 (PMYLFLANLSFADISSISNSVP) traverse the membrane as a helical segment. Residues 93–113 (KMLVNIQTKSQSISYESCITQ) are Extracellular-facing. A disulfide bridge links Cys110 with Cys202. A helical membrane pass occupies residues 114–133 (MYFSIVFVVIDNLLLGTMAY). At 134–152 (DHFVAICHPLNYTILMRPR) the chain is on the cytoplasmic side. A helical membrane pass occupies residues 153–171 (FGILLTVISWFLSNIIALT). Over 172–208 (HTLLLIQLLFCNHNTLPHFFCDLAPLLKLSCSDTLIN) the chain is Extracellular. Residues 209 to 232 (ELVLFIVGLSVIIFPFTLSFFSYV) traverse the membrane as a helical segment. Residues 233–249 (CIIRAVLRVSSTQGKWK) lie on the Cytoplasmic side of the membrane. A helical membrane pass occupies residues 250–272 (AFSTCGSHLTVVLLFYGTIVGVY). The Extracellular portion of the chain corresponds to 273–285 (FFPSSTHPEDTDK). A helical membrane pass occupies residues 286 to 305 (IGAVLFTVVTPMINPFIYSL). Over 306-325 (RNKDMKGALRKLINRKISSL) the chain is Cytoplasmic.

This sequence belongs to the G-protein coupled receptor 1 family.

It localises to the cell membrane. Odorant receptor. This is Olfactory receptor 1S1 (OR1S1) from Homo sapiens (Human).